The chain runs to 351 residues: uncharacterized protein (351 aa).

Residues 14–69 (PRLADIAAQAQVSEATASRVLNGRPASRXSTRQRVLAALDLLGYERPTRLRRRSAG) form the HTH lacI-type domain. The segment at residues 16–35 (LADIAAQAQVSEATASRVLN) is a DNA-binding region (H-T-H motif).

Functionally, putative sugar-binding regulatory protein for the alpha-amylase gene. This is an uncharacterized protein from Streptomyces limosus (Streptomyces albidoflavus).